The primary structure comprises 316 residues: 4-hydroxy-3-methylbut-2-enyl diphosphate reductase (316 aa).

Cys12 is a [4Fe-4S] cluster binding site. The (2E)-4-hydroxy-3-methylbut-2-enyl diphosphate site is built by His43 and His81. Positions 43 and 81 each coordinate dimethylallyl diphosphate. Isopentenyl diphosphate-binding residues include His43 and His81. Cys103 provides a ligand contact to [4Fe-4S] cluster. His131 is a (2E)-4-hydroxy-3-methylbut-2-enyl diphosphate binding site. His131 contributes to the dimethylallyl diphosphate binding site. His131 contacts isopentenyl diphosphate. Glu133 (proton donor) is an active-site residue. Position 170 (Thr170) interacts with (2E)-4-hydroxy-3-methylbut-2-enyl diphosphate. Cys198 is a [4Fe-4S] cluster binding site. (2E)-4-hydroxy-3-methylbut-2-enyl diphosphate-binding residues include Ser226, Asn228, and Ser271. Dimethylallyl diphosphate-binding residues include Ser226, Asn228, and Ser271. Isopentenyl diphosphate is bound by residues Ser226, Asn228, and Ser271.

The protein belongs to the IspH family. Requires [4Fe-4S] cluster as cofactor.

The catalysed reaction is isopentenyl diphosphate + 2 oxidized [2Fe-2S]-[ferredoxin] + H2O = (2E)-4-hydroxy-3-methylbut-2-enyl diphosphate + 2 reduced [2Fe-2S]-[ferredoxin] + 2 H(+). The enzyme catalyses dimethylallyl diphosphate + 2 oxidized [2Fe-2S]-[ferredoxin] + H2O = (2E)-4-hydroxy-3-methylbut-2-enyl diphosphate + 2 reduced [2Fe-2S]-[ferredoxin] + 2 H(+). It participates in isoprenoid biosynthesis; dimethylallyl diphosphate biosynthesis; dimethylallyl diphosphate from (2E)-4-hydroxy-3-methylbutenyl diphosphate: step 1/1. The protein operates within isoprenoid biosynthesis; isopentenyl diphosphate biosynthesis via DXP pathway; isopentenyl diphosphate from 1-deoxy-D-xylulose 5-phosphate: step 6/6. Catalyzes the conversion of 1-hydroxy-2-methyl-2-(E)-butenyl 4-diphosphate (HMBPP) into a mixture of isopentenyl diphosphate (IPP) and dimethylallyl diphosphate (DMAPP). Acts in the terminal step of the DOXP/MEP pathway for isoprenoid precursor biosynthesis. The polypeptide is 4-hydroxy-3-methylbut-2-enyl diphosphate reductase (Bacillus anthracis (strain A0248)).